Here is a 161-residue protein sequence, read N- to C-terminus: Thy-1 membrane glycoprotein (161 aa).

The N-terminal stretch at 1–19 (MNLAISIALLLTVLQVSRG) is a signal peptide. At Gln-20 the chain carries Pyrrolidone carboxylic acid. The region spanning 20 to 126 (QKVTSLTACL…SQNVTVLRDK (107 aa)) is the Ig-like V-type domain. Cystine bridges form between Cys-28–Cys-130 and Cys-38–Cys-104. Asn-42 and Asn-79 each carry an N-linked (GlcNAc...) asparagine glycan. Ser-82 carries the phosphoserine modification. The N-linked (GlcNAc...) asparagine glycan is linked to Asn-119. Cys-130 is lipidated: GPI-anchor amidated cysteine; alternate. A propeptide spans 131-161 (EGISLLAQNTSWLLLLLLSLSLLQATDFMSL) (removed in mature form). Asn-139 carries N-linked (GlcNAc...) asparagine glycosylation.

The protein resides in the cell membrane. Its function is as follows. May play a role in cell-cell or cell-ligand interactions during synaptogenesis and other events in the brain. This Homo sapiens (Human) protein is Thy-1 membrane glycoprotein (THY1).